Reading from the N-terminus, the 447-residue chain is Signal recognition particle 54 kDa protein (447 aa).

Residues 103-110 (GVQGSGKT), 185-189 (DTAGR), and 245-248 (TKMD) contribute to the GTP site.

This sequence belongs to the GTP-binding SRP family. SRP54 subfamily. In terms of assembly, part of the signal recognition particle protein translocation system, which is composed of SRP and FtsY. Archaeal SRP consists of a 7S RNA molecule of 300 nucleotides and two protein subunits: SRP54 and SRP19.

It is found in the cytoplasm. It carries out the reaction GTP + H2O = GDP + phosphate + H(+). Functionally, involved in targeting and insertion of nascent membrane proteins into the cytoplasmic membrane. Binds to the hydrophobic signal sequence of the ribosome-nascent chain (RNC) as it emerges from the ribosomes. The SRP-RNC complex is then targeted to the cytoplasmic membrane where it interacts with the SRP receptor FtsY. In Saccharolobus islandicus (strain Y.G.57.14 / Yellowstone #1) (Sulfolobus islandicus), this protein is Signal recognition particle 54 kDa protein.